The following is a 278-amino-acid chain: Juvenile hormone acid O-methyltransferase (278 aa).

This sequence belongs to the methyltransferase superfamily. Specifically expressed in the corpora allata (CA).

It carries out the reaction (2E,6E)-farnesoate + S-adenosyl-L-methionine = methyl (2E,6E)-farnesoate + S-adenosyl-L-homocysteine. It catalyses the reaction juvenile hormone III carboxylate + S-adenosyl-L-methionine = juvenile hormone III + S-adenosyl-L-homocysteine. Functionally, O-methyltransferase that transfers a methyl group from S-adenosyl-L-methionine (SAM) to the carboxyl group of juvenile hormone acids to produce active juvenile hormones in the corpora allata, the last step during juvenile hormone biosynthesis. Also able to methylate farnesoate to methyl farnesoate. This is Juvenile hormone acid O-methyltransferase from Bombyx mori (Silk moth).